Consider the following 378-residue polypeptide: 2-aminoethylphosphonate--pyruvate transaminase 1 (378 aa).

Lys194 carries the N6-(pyridoxal phosphate)lysine modification.

It belongs to the class-V pyridoxal-phosphate-dependent aminotransferase family. PhnW subfamily. As to quaternary structure, homodimer. Pyridoxal 5'-phosphate serves as cofactor.

The catalysed reaction is (2-aminoethyl)phosphonate + pyruvate = phosphonoacetaldehyde + L-alanine. In terms of biological role, involved in phosphonate degradation. The sequence is that of 2-aminoethylphosphonate--pyruvate transaminase 1 from Cupriavidus pinatubonensis (strain JMP 134 / LMG 1197) (Cupriavidus necator (strain JMP 134)).